The sequence spans 306 residues: UDP-3-O-acyl-N-acetylglucosamine deacetylase (306 aa).

3 residues coordinate Zn(2+): histidine 79, histidine 239, and aspartate 243. Histidine 266 (proton donor) is an active-site residue.

This sequence belongs to the LpxC family. Zn(2+) serves as cofactor.

The catalysed reaction is a UDP-3-O-[(3R)-3-hydroxyacyl]-N-acetyl-alpha-D-glucosamine + H2O = a UDP-3-O-[(3R)-3-hydroxyacyl]-alpha-D-glucosamine + acetate. Its pathway is glycolipid biosynthesis; lipid IV(A) biosynthesis; lipid IV(A) from (3R)-3-hydroxytetradecanoyl-[acyl-carrier-protein] and UDP-N-acetyl-alpha-D-glucosamine: step 2/6. Its function is as follows. Catalyzes the hydrolysis of UDP-3-O-myristoyl-N-acetylglucosamine to form UDP-3-O-myristoylglucosamine and acetate, the committed step in lipid A biosynthesis. In Actinobacillus pleuropneumoniae serotype 7 (strain AP76), this protein is UDP-3-O-acyl-N-acetylglucosamine deacetylase.